Reading from the N-terminus, the 238-residue chain is Ribonuclease PH (238 aa).

Phosphate-binding positions include Arg86 and 124-126 (GTR).

The protein belongs to the RNase PH family. Homohexameric ring arranged as a trimer of dimers.

It carries out the reaction tRNA(n+1) + phosphate = tRNA(n) + a ribonucleoside 5'-diphosphate. Phosphorolytic 3'-5' exoribonuclease that plays an important role in tRNA 3'-end maturation. Removes nucleotide residues following the 3'-CCA terminus of tRNAs; can also add nucleotides to the ends of RNA molecules by using nucleoside diphosphates as substrates, but this may not be physiologically important. Probably plays a role in initiation of 16S rRNA degradation (leading to ribosome degradation) during starvation. This is Ribonuclease PH from Maricaulis maris (strain MCS10) (Caulobacter maris).